Reading from the N-terminus, the 82-residue chain is Delta-conotoxin-like SmVIA (82 aa).

An N-terminal signal peptide occupies residues 1–22; it reads MKLTCVMIVAVLFLIAWTFVTA. Positions 23-49 are excised as a propeptide; it reads DDSRNGLKNLFPKARHEMKNPEASKLN. 3 disulfides stabilise this stretch: Cys54-Cys69, Cys61-Cys73, and Cys68-Cys77. A 4-hydroxyproline modification is found at Pro65.

The protein belongs to the conotoxin O1 superfamily. In terms of tissue distribution, expressed by the venom duct.

It is found in the secreted. Functionally, delta-conotoxins bind to site 6 of voltage-gated sodium channels (Nav) and inhibit the inactivation process. The chain is Delta-conotoxin-like SmVIA from Conus stercusmuscarum (Fly-specked cone).